Here is a 191-residue protein sequence, read N- to C-terminus: Molybdenum cofactor guanylyltransferase (191 aa).

GTP is bound by residues 11–13 (LCG), K23, D66, and D97. D97 contacts Mg(2+).

Belongs to the MobA family. As to quaternary structure, monomer. Mg(2+) is required as a cofactor.

The protein localises to the cytoplasm. The catalysed reaction is Mo-molybdopterin + GTP + H(+) = Mo-molybdopterin guanine dinucleotide + diphosphate. Functionally, transfers a GMP moiety from GTP to Mo-molybdopterin (Mo-MPT) cofactor (Moco or molybdenum cofactor) to form Mo-molybdopterin guanine dinucleotide (Mo-MGD) cofactor. The protein is Molybdenum cofactor guanylyltransferase of Campylobacter jejuni subsp. jejuni serotype O:2 (strain ATCC 700819 / NCTC 11168).